Reading from the N-terminus, the 699-residue chain is Cyclic AMP-dependent transcription factor ATF-6 beta (699 aa).

Position 2 is an N-acetylalanine (Ala-2). Over 2-393 (AELMLLSEIA…GLKLGSGNRK (392 aa)) the chain is Cytoplasmic. 3 disordered regions span residues 59-114 (SLDV…QVPG), 218-246 (VQIS…PKPV), and 290-313 (EGPA…PGNS). Positions 68-78 (PPEPPWDPLPI) are enriched in pro residues. Residues 86–109 (SEPSSPCSSSSLSSESSHLSTEPP) show a composition bias toward low complexity. The bZIP domain maps to 322-385 (LLKRQQRMIK…EALLAENSGL (64 aa)). Residues 324–344 (KRQQRMIKNRESACQSRRKKK) are basic motif. Positions 347–354 (LQGLEARL) are leucine-zipper. The chain crosses the membrane as a helical; Signal-anchor for type II membrane protein span at residues 394 to 414 (VVCIMVFLLFIAFNFGPVSIS). Residues 415-699 (EPPPAPMSPR…ASQPLYLNHP (285 aa)) lie on the Lumenal side of the membrane. Residues 417-474 (PPAPMSPRMSREEPRPQRHLLGFSEPGPAHGMEPLREAAQSPGEQQPSSAGRPSFRNL) are disordered. The segment covering 458 to 467 (PGEQQPSSAG) has biased composition (polar residues). N-linked (GlcNAc...) asparagine glycans are attached at residues Asn-473 and Asn-502. Residues 519–529 (RHQRGRRKIPH) show a composition bias toward basic residues. The tract at residues 519–563 (RHQRGRRKIPHRAQERQKSQLRKKSPPVKPVPTQPPGPPERDPVG) is disordered. Positions 545–556 (PVKPVPTQPPGP) are enriched in pro residues. Asn-607, Asn-624, and Asn-673 each carry an N-linked (GlcNAc...) asparagine glycan. The tract at residues 657 to 699 (STVPPSLRKQPSPSPGNTTGGPLPGSAASPAHQASQPLYLNHP) is disordered. Low complexity predominate over residues 680–693 (PGSAASPAHQASQP).

This sequence belongs to the bZIP family. ATF subfamily. Homodimer and heterodimer with ATF6-alpha. The dimer interacts with the nuclear transcription factor Y (NF-Y) trimer through direct binding to NF-Y subunit C (NF-YC). In terms of processing, N-glycosylated. Post-translationally, during unfolded protein response, a fragment of approximately 60 kDa containing the cytoplasmic transcription factor domain is released by proteolysis. The cleavage is probably performed sequentially by site-1 (MBTPS1, S1P) and site-2 (MBTPS2, S2P) proteases.

The protein resides in the endoplasmic reticulum membrane. It localises to the nucleus. Functionally, precursor of the transcription factor form (Processed cyclic AMP-dependent transcription factor ATF-6 beta), which is embedded in the endoplasmic reticulum membrane. Endoplasmic reticulum stress promotes processing of this form, releasing the transcription factor form that translocates into the nucleus, where it activates transcription of genes involved in the unfolded protein response (UPR). Its function is as follows. Transcription factor that acts in the unfolded protein response (UPR) pathway by activating UPR target genes induced during ER stress. Binds DNA on the 5'-CCAC[GA]-3' half of the ER stress response element (ERSE) (5'-CCAATN(9)CCAC[GA]-3') when NF-Y is bound to ERSE. The polypeptide is Cyclic AMP-dependent transcription factor ATF-6 beta (Atf6b) (Mus musculus (Mouse)).